The primary structure comprises 67 residues: Ceratotoxin-C (67 aa).

A signal peptide spans 1-23 (MANIKAVFLICIVAFIAFHCVVA). Positions 24-35 (EPTAEDSVVVKR) are excised as a propeptide.

In terms of assembly, homomer of four to six subunits.

The protein resides in the secreted. Its function is as follows. Female-specific peptides with potent activity against Gram-positive and Gram-negative bacteria. They have as well hemolytic activity. The polypeptide is Ceratotoxin-C (CTXC1) (Ceratitis capitata (Mediterranean fruit fly)).